The primary structure comprises 415 residues: Diaminopimelate decarboxylase (415 aa).

An N6-(pyridoxal phosphate)lysine modification is found at K60. Residues G239 and 273–276 contribute to the pyridoxal 5'-phosphate site; that span reads EPGR. Substrate is bound by residues R276, R312, and Y316. Residue C342 is the Proton donor of the active site. Residues E343 and Y370 each contribute to the substrate site. Y370 serves as a coordination point for pyridoxal 5'-phosphate.

It belongs to the Orn/Lys/Arg decarboxylase class-II family. LysA subfamily. In terms of assembly, homodimer. Pyridoxal 5'-phosphate is required as a cofactor.

It catalyses the reaction meso-2,6-diaminopimelate + H(+) = L-lysine + CO2. The protein operates within amino-acid biosynthesis; L-lysine biosynthesis via DAP pathway; L-lysine from DL-2,6-diaminopimelate: step 1/1. Functionally, specifically catalyzes the decarboxylation of meso-diaminopimelate (meso-DAP) to L-lysine. In Pseudomonas aeruginosa (strain ATCC 15692 / DSM 22644 / CIP 104116 / JCM 14847 / LMG 12228 / 1C / PRS 101 / PAO1), this protein is Diaminopimelate decarboxylase.